The chain runs to 142 residues: Small ribosomal subunit protein uS12 (142 aa).

Residues 1–44 (MANGKYAARKLKQDRQQRRWSDSEYARRERGLGAKSDPLEGAPQ) are disordered. Residues 11–32 (LKQDRQQRRWSDSEYARRERGL) show a composition bias toward basic and acidic residues.

The protein belongs to the universal ribosomal protein uS12 family. In terms of assembly, part of the 30S ribosomal subunit.

In terms of biological role, with S4 and S5 plays an important role in translational accuracy. Located at the interface of the 30S and 50S subunits. In Haloquadratum walsbyi (strain DSM 16790 / HBSQ001), this protein is Small ribosomal subunit protein uS12.